The primary structure comprises 46 residues: Probable butyrate kinase (46 aa).

The protein belongs to the acetokinase family.

The protein resides in the cytoplasm. It carries out the reaction butanoate + ATP = butanoyl phosphate + ADP. The sequence is that of Probable butyrate kinase (buk) from Geobacillus stearothermophilus (Bacillus stearothermophilus).